A 122-amino-acid polypeptide reads, in one-letter code: Small ribosomal subunit protein uS13 (122 aa).

The tract at residues 97–122 (PVRGQRTHTNARTRKGPAKAIAGKKK) is disordered.

This sequence belongs to the universal ribosomal protein uS13 family. Part of the 30S ribosomal subunit. Forms a loose heterodimer with protein S19. Forms two bridges to the 50S subunit in the 70S ribosome.

Functionally, located at the top of the head of the 30S subunit, it contacts several helices of the 16S rRNA. In the 70S ribosome it contacts the 23S rRNA (bridge B1a) and protein L5 of the 50S subunit (bridge B1b), connecting the 2 subunits; these bridges are implicated in subunit movement. Contacts the tRNAs in the A and P-sites. This chain is Small ribosomal subunit protein uS13, found in Brucella anthropi (strain ATCC 49188 / DSM 6882 / CCUG 24695 / JCM 21032 / LMG 3331 / NBRC 15819 / NCTC 12168 / Alc 37) (Ochrobactrum anthropi).